Here is a 436-residue protein sequence, read N- to C-terminus: uncharacterized protein (436 aa).

The N-terminal stretch at 1–18 is a signal peptide; it reads MMKRFVALSMAIFSLSFA.

This is an uncharacterized protein from Aquifex aeolicus (strain VF5).